The following is a 437-amino-acid chain: Transcription factor 12 (437 aa).

3 disordered regions span residues 1 to 68, 80 to 123, and 244 to 335; these read EFHD…QTGD, PDHT…YENS, and ASNT…ERRM. A compositionally biased stretch (polar residues) spans 13 to 37; sequence VSPTDISTSLPPMSSFHRGSTSSSP. T44 bears the Phosphothreonine mark. A Phosphoserine modification is found at S64. Low complexity predominate over residues 83-94; sequence TSSSFPSNPSTP. Composition is skewed to polar residues over residues 95 to 107 and 114 to 123; these read VGSP…TSQW and APSSPSYENS. 2 stretches are compositionally biased toward basic and acidic residues: residues 273–285 and 291–306; these read IKTE…ENLH and DDMK…DIKV. Residue K274 forms a Glycyl lysine isopeptide (Lys-Gly) (interchain with G-Cter in SUMO2) linkage. S295 bears the Phosphoserine mark. A Glycyl lysine isopeptide (Lys-Gly) (interchain with G-Cter in SUMO2) cross-link involves residue K305. T312 is subject to Phosphothreonine. Phosphoserine is present on residues S313 and S314. A compositionally biased stretch (basic and acidic residues) spans 323 to 335; it reads PEQKIEREKERRM. The region spanning 332–385 is the bHLH domain; the sequence is ERRMANNARERLRVRDINEAFKELGRMCQLHLKSEKPQTKLLILHQAVAVILSL. Residues K364 and K408 each participate in a glycyl lysine isopeptide (Lys-Gly) (interchain with G-Cter in SUMO2) cross-link. A class A specific domain region spans residues 387–410; sequence QQVRERNLNPKAACLKRREEEKVS. Positions 405–437 are disordered; it reads EEEKVSAASAEPPTTLPGTHPGLSETTNPMGHL. Positions 416-427 are enriched in low complexity; it reads PPTTLPGTHPGL. Residues 428–437 are compositionally biased toward polar residues; the sequence is SETTNPMGHL.

Efficient DNA binding requires dimerization with another bHLH protein. Forms homo- or heterooligomers with myogenin, E12 and ITF2 proteins. Interacts with NEUROD2. Interacts with PTF1A. Interacts with RUNX1T1. Interacts with BHLHA9.

Its subcellular location is the nucleus. In terms of biological role, transcriptional regulator. Involved in the initiation of neuronal differentiation. Activates transcription by binding to the E box (5'-CANNTG-3'). Participates in the control of inducible RP4 gene expression in salivary cells. Binds to the RIPE3 element of the insulin II promoter. May be involved in the functional network that regulates the development of the GnRH axis. This Mesocricetus auratus (Golden hamster) protein is Transcription factor 12 (TCF12).